Consider the following 240-residue polypeptide: Pyridoxine 5'-phosphate synthase (240 aa).

Position 7 (Asn7) interacts with 3-amino-2-oxopropyl phosphate. Residue 9 to 10 (DH) coordinates 1-deoxy-D-xylulose 5-phosphate. Position 18 (Arg18) interacts with 3-amino-2-oxopropyl phosphate. The active-site Proton acceptor is His43. Positions 45 and 50 each coordinate 1-deoxy-D-xylulose 5-phosphate. Glu70 (proton acceptor) is an active-site residue. Thr100 contributes to the 1-deoxy-D-xylulose 5-phosphate binding site. The active-site Proton donor is the His191. 3-amino-2-oxopropyl phosphate-binding positions include Gly192 and 213 to 214 (GH).

Belongs to the PNP synthase family. In terms of assembly, homooctamer; tetramer of dimers.

The protein resides in the cytoplasm. It carries out the reaction 3-amino-2-oxopropyl phosphate + 1-deoxy-D-xylulose 5-phosphate = pyridoxine 5'-phosphate + phosphate + 2 H2O + H(+). It participates in cofactor biosynthesis; pyridoxine 5'-phosphate biosynthesis; pyridoxine 5'-phosphate from D-erythrose 4-phosphate: step 5/5. Functionally, catalyzes the complicated ring closure reaction between the two acyclic compounds 1-deoxy-D-xylulose-5-phosphate (DXP) and 3-amino-2-oxopropyl phosphate (1-amino-acetone-3-phosphate or AAP) to form pyridoxine 5'-phosphate (PNP) and inorganic phosphate. This is Pyridoxine 5'-phosphate synthase from Microcystis aeruginosa (strain NIES-843 / IAM M-2473).